A 59-amino-acid polypeptide reads, in one-letter code: Large ribosomal subunit protein bL35 (59 aa).

2 disordered regions span residues 1–22 (MKVK…IKRK) and 30–49 (APHK…TVSA). Basic residues predominate over residues 30–43 (APHKTTKQKRHLRK).

Belongs to the bacterial ribosomal protein bL35 family.

This chain is Large ribosomal subunit protein bL35 (rpmI), found in Mycoplasma pneumoniae (strain ATCC 29342 / M129 / Subtype 1) (Mycoplasmoides pneumoniae).